The primary structure comprises 194 residues: MRVMGVDPGLTRCGLSVIESGKGRQVIALDVDVVRTPAGHPLAHRLLAISDAVDHWLDTHRPDVIAIERVFSNQNANTAMGTAQAGGVIALAAARRDIDVHFHTPSEVKAAVTGNGRADKAQVTEMVTRILALQQKPTPADAADALALAICHCWRAPMLGRMAAAEEMAAEQRRKYQATLKAKAKAAQMSRSTR.

Residues Asp-7, Glu-68, and Asp-141 contribute to the active site. Positions 7, 68, and 141 each coordinate Mg(2+).

Belongs to the RuvC family. As to quaternary structure, homodimer which binds Holliday junction (HJ) DNA. The HJ becomes 2-fold symmetrical on binding to RuvC with unstacked arms; it has a different conformation from HJ DNA in complex with RuvA. In the full resolvosome a probable DNA-RuvA(4)-RuvB(12)-RuvC(2) complex forms which resolves the HJ. Mg(2+) is required as a cofactor.

It is found in the cytoplasm. It catalyses the reaction Endonucleolytic cleavage at a junction such as a reciprocal single-stranded crossover between two homologous DNA duplexes (Holliday junction).. In terms of biological role, the RuvA-RuvB-RuvC complex processes Holliday junction (HJ) DNA during genetic recombination and DNA repair. Endonuclease that resolves HJ intermediates. Cleaves cruciform DNA by making single-stranded nicks across the HJ at symmetrical positions within the homologous arms, yielding a 5'-phosphate and a 3'-hydroxyl group; requires a central core of homology in the junction. The consensus cleavage sequence is 5'-(A/T)TT(C/G)-3'. Cleavage occurs on the 3'-side of the TT dinucleotide at the point of strand exchange. HJ branch migration catalyzed by RuvA-RuvB allows RuvC to scan DNA until it finds its consensus sequence, where it cleaves and resolves the cruciform DNA. The chain is Crossover junction endodeoxyribonuclease RuvC from Mycolicibacterium vanbaalenii (strain DSM 7251 / JCM 13017 / BCRC 16820 / KCTC 9966 / NRRL B-24157 / PYR-1) (Mycobacterium vanbaalenii).